We begin with the raw amino-acid sequence, 461 residues long: Ornithine decarboxylase (461 aa).

At K69 the chain carries N6-(pyridoxal phosphate)lysine. Pyridoxal 5'-phosphate is bound by residues S200, G237, and 274-277; that span reads EPGR. Position 303 is a phosphoserine; by CK2 (S303). Residue 331-332 coordinates substrate; sequence YD. Residue C360 is the Proton donor; shared with dimeric partner of the active site. C360 bears the S-nitrosocysteine mark. Residue D361 participates in substrate binding. Residue Y389 participates in pyridoxal 5'-phosphate binding.

The protein belongs to the Orn/Lys/Arg decarboxylase class-II family. Homodimer. Only the dimer is catalytically active, as the active sites are constructed of residues from both monomers. The cofactor is pyridoxal 5'-phosphate.

The enzyme catalyses L-ornithine + H(+) = putrescine + CO2. It participates in amine and polyamine biosynthesis; putrescine biosynthesis via L-ornithine pathway; putrescine from L-ornithine: step 1/1. With respect to regulation, inhibited by antizymes (AZs) OAZ1, OAZ2 and OAZ3 in response to polyamine levels. AZs inhibit the assembly of the functional homodimer by binding to ODC monomers. Additionally, OAZ1 targets ODC monomers for ubiquitin-independent proteolytic destruction by the 26S proteasome. Catalyzes the first and rate-limiting step of polyamine biosynthesis that converts ornithine into putrescine, which is the precursor for the polyamines, spermidine and spermine. Polyamines are essential for cell proliferation and are implicated in cellular processes, ranging from DNA replication to apoptosis. The polypeptide is Ornithine decarboxylase (Odc1) (Rattus norvegicus (Rat)).